The sequence spans 337 residues: ELAV-like protein 1-A (337 aa).

RRM domains follow at residues 20 to 109 (TNLI…FARP), 117 to 197 (ANLY…FAAN), and 255 to 333 (WCIF…FKTS).

This sequence belongs to the RRM elav family. As to quaternary structure, interacts (via RRM3) with cirbp. Unable to form oligomers. Part of a ribonucleoprotein (RNP) complex, at least composed of elavl1/elrA and/or elavl2/elrB, igf2bp3/vg1RBP, ddx6/Xp54, ybx2/frgy2, lsm14b/rap55b and, in a subset of RNP complexes, stau1/staufen. Ubiquitously expressed in adults.

It is found in the cytoplasm. Its subcellular location is the cell cortex. In terms of biological role, RNA-binding protein that binds to the 3'-UTR region of mRNAs and increases their stability. Involved in embryonic stem cells (ESCs) differentiation: preferentially binds mRNAs that are not methylated by N6-methyladenosine (m6A), stabilizing them, promoting ESCs differentiation. Binds to poly-U elements and AU-rich elements (AREs) in the 3'-UTR of target mRNAs. May be involved in cytoplasmic mRNA polyadenylation. Acts cooperatively with cribp to stabilize AU-rich sequence (ARE)-containing mRNAs. May play a role during gastrulation. Required for the vegetal localization of vg1 mRNA. The polypeptide is ELAV-like protein 1-A (elavl1-a) (Xenopus laevis (African clawed frog)).